We begin with the raw amino-acid sequence, 330 residues long: Phosphatidylglycerol--prolipoprotein diacylglyceryl transferase (330 aa).

3 helical membrane-spanning segments follow: residues 22 to 42 (LPIRAYALLIILGIVAALVVG), 57 to 77 (YDIALWAVPFGLVGGRLYHLA), and 97 to 117 (IWDGGLGIWGAVALGCVGAWL). Arginine 145 contributes to the a 1,2-diacyl-sn-glycero-3-phospho-(1'-sn-glycerol) binding site. The next 2 helical transmembrane spans lie at 193 to 213 (VVQPTFLYELIWNVLVFFALI) and 257 to 277 (INSFTSTFVFIGAVVYIILAP).

Belongs to the Lgt family.

It localises to the cell membrane. The catalysed reaction is L-cysteinyl-[prolipoprotein] + a 1,2-diacyl-sn-glycero-3-phospho-(1'-sn-glycerol) = an S-1,2-diacyl-sn-glyceryl-L-cysteinyl-[prolipoprotein] + sn-glycerol 1-phosphate + H(+). It functions in the pathway protein modification; lipoprotein biosynthesis (diacylglyceryl transfer). In terms of biological role, catalyzes the transfer of the diacylglyceryl group from phosphatidylglycerol to the sulfhydryl group of the N-terminal cysteine of a prolipoprotein, the first step in the formation of mature lipoproteins. This is Phosphatidylglycerol--prolipoprotein diacylglyceryl transferase from Mycobacterium leprae (strain Br4923).